Here is a 663-residue protein sequence, read N- to C-terminus: UvrABC system protein B (663 aa).

The Helicase ATP-binding domain occupies 30 to 417; that stretch reads DGIKAGKRHQ…TDKMVEQIIR (388 aa). 43–50 is a binding site for ATP; that stretch reads GATGTGKT. The Beta-hairpin signature appears at 96 to 119; it reads YYDYYQPEAYVPSTDTFIEKDASI. One can recognise a Helicase C-terminal domain in the interval 434–600; the sequence is QIDDLLSEIQ…TINKKIHDLI (167 aa). The region spanning 627 to 662 is the UVR domain; that stretch reads QKTIDNIEKEMKQAAKDLDFEKATELRDMLFELKAE.

Belongs to the UvrB family. Forms a heterotetramer with UvrA during the search for lesions. Interacts with UvrC in an incision complex.

The protein resides in the cytoplasm. Functionally, the UvrABC repair system catalyzes the recognition and processing of DNA lesions. A damage recognition complex composed of 2 UvrA and 2 UvrB subunits scans DNA for abnormalities. Upon binding of the UvrA(2)B(2) complex to a putative damaged site, the DNA wraps around one UvrB monomer. DNA wrap is dependent on ATP binding by UvrB and probably causes local melting of the DNA helix, facilitating insertion of UvrB beta-hairpin between the DNA strands. Then UvrB probes one DNA strand for the presence of a lesion. If a lesion is found the UvrA subunits dissociate and the UvrB-DNA preincision complex is formed. This complex is subsequently bound by UvrC and the second UvrB is released. If no lesion is found, the DNA wraps around the other UvrB subunit that will check the other stand for damage. The sequence is that of UvrABC system protein B from Staphylococcus aureus (strain Mu50 / ATCC 700699).